The sequence spans 159 residues: Neuroglobin (159 aa).

Residues K3–A151 enclose the Globin domain. The heme b site is built by H66 and H98.

The protein belongs to the globin family. As to quaternary structure, monomer. Homodimers and homotetramers. Mainly monomeric but also detected as part of homodimers and homotetramers.

It is found in the cytoplasm. The protein resides in the cytosol. The protein localises to the mitochondrion matrix. It catalyses the reaction Fe(III)-heme b-[protein] + nitric oxide + H2O = Fe(II)-heme b-[protein] + nitrite + 2 H(+). Its function is as follows. Monomeric globin with a bis-histidyl six-coordinate heme-iron atom through which it can bind dioxygen, carbon monoxide and nitric oxide. Could help transport oxygen and increase its availability to the metabolically active neuronal tissues, though its low quantity in tissues as well as its high affinity for dioxygen, which may limit its oxygen-releasing ability, argue against it. The ferrous/deoxygenated form exhibits a nitrite reductase activity and it could produce nitric oxide which in turn inhibits cellular respiration in response to hypoxia. In its ferrous/deoxygenated state, it may also exhibit GDI (Guanine nucleotide Dissociation Inhibitor) activity toward heterotrimeric G-alpha proteins, thereby regulating signal transduction to facilitate neuroprotective responses in the wake of hypoxia and associated oxidative stress. The polypeptide is Neuroglobin (ngb) (Tetraodon nigroviridis (Spotted green pufferfish)).